Reading from the N-terminus, the 283-residue chain is Thymidylate synthase (283 aa).

Residue Arg22 participates in dUMP binding. Cys160 (nucleophile) is an active-site residue. DUMP is bound by residues 180–183, Asn191, and 221–223; these read RSCD and HIY. Asp183 serves as a coordination point for (6R)-5,10-methylene-5,6,7,8-tetrahydrofolate. (6R)-5,10-methylene-5,6,7,8-tetrahydrofolate is bound at residue Ser282.

Belongs to the thymidylate synthase family. Bacterial-type ThyA subfamily. In terms of assembly, homodimer.

It is found in the cytoplasm. The enzyme catalyses dUMP + (6R)-5,10-methylene-5,6,7,8-tetrahydrofolate = 7,8-dihydrofolate + dTMP. Its pathway is pyrimidine metabolism; dTTP biosynthesis. In terms of biological role, catalyzes the reductive methylation of 2'-deoxyuridine-5'-monophosphate (dUMP) to 2'-deoxythymidine-5'-monophosphate (dTMP) while utilizing 5,10-methylenetetrahydrofolate (mTHF) as the methyl donor and reductant in the reaction, yielding dihydrofolate (DHF) as a by-product. This enzymatic reaction provides an intracellular de novo source of dTMP, an essential precursor for DNA biosynthesis. This is Thymidylate synthase from Shewanella piezotolerans (strain WP3 / JCM 13877).